The chain runs to 701 residues: C6 finger domain transcription factor nscR (701 aa).

The zn(2)-C6 fungal-type DNA-binding region spans C17–C43.

It is found in the nucleus. Transcription factor that specifically regulates the neosartoricin B biosynthesis gene cluster. This is C6 finger domain transcription factor nscR from Arthroderma gypseum (strain ATCC MYA-4604 / CBS 118893) (Microsporum gypseum).